A 254-amino-acid polypeptide reads, in one-letter code: 5-oxoprolinase subunit A (254 aa).

The protein belongs to the LamB/PxpA family. As to quaternary structure, forms a complex composed of PxpA, PxpB and PxpC.

It carries out the reaction 5-oxo-L-proline + ATP + 2 H2O = L-glutamate + ADP + phosphate + H(+). Its function is as follows. Catalyzes the cleavage of 5-oxoproline to form L-glutamate coupled to the hydrolysis of ATP to ADP and inorganic phosphate. The chain is 5-oxoprolinase subunit A from Carboxydothermus hydrogenoformans (strain ATCC BAA-161 / DSM 6008 / Z-2901).